We begin with the raw amino-acid sequence, 404 residues long: Cysteine desulfurase IscS (404 aa).

Residues 75 to 76, Asn-155, Gln-183, and 203 to 205 contribute to the pyridoxal 5'-phosphate site; these read AT and SGH. At Lys-206 the chain carries N6-(pyridoxal phosphate)lysine. Thr-243 provides a ligand contact to pyridoxal 5'-phosphate. Cys-328 (cysteine persulfide intermediate) is an active-site residue. A [2Fe-2S] cluster-binding site is contributed by Cys-328.

Belongs to the class-V pyridoxal-phosphate-dependent aminotransferase family. NifS/IscS subfamily. Homodimer. Forms a heterotetramer with IscU, interacts with other sulfur acceptors. It depends on pyridoxal 5'-phosphate as a cofactor.

It is found in the cytoplasm. The enzyme catalyses (sulfur carrier)-H + L-cysteine = (sulfur carrier)-SH + L-alanine. It functions in the pathway cofactor biosynthesis; iron-sulfur cluster biosynthesis. Functionally, master enzyme that delivers sulfur to a number of partners involved in Fe-S cluster assembly, tRNA modification or cofactor biosynthesis. Catalyzes the removal of elemental sulfur atoms from cysteine to produce alanine. Functions as a sulfur delivery protein for Fe-S cluster synthesis onto IscU, an Fe-S scaffold assembly protein, as well as other S acceptor proteins. This is Cysteine desulfurase IscS from Shewanella baltica (strain OS155 / ATCC BAA-1091).